Reading from the N-terminus, the 236-residue chain is Leucyl/phenylalanyl-tRNA--protein transferase (236 aa).

Belongs to the L/F-transferase family.

The protein localises to the cytoplasm. It carries out the reaction N-terminal L-lysyl-[protein] + L-leucyl-tRNA(Leu) = N-terminal L-leucyl-L-lysyl-[protein] + tRNA(Leu) + H(+). The catalysed reaction is N-terminal L-arginyl-[protein] + L-leucyl-tRNA(Leu) = N-terminal L-leucyl-L-arginyl-[protein] + tRNA(Leu) + H(+). The enzyme catalyses L-phenylalanyl-tRNA(Phe) + an N-terminal L-alpha-aminoacyl-[protein] = an N-terminal L-phenylalanyl-L-alpha-aminoacyl-[protein] + tRNA(Phe). Its function is as follows. Functions in the N-end rule pathway of protein degradation where it conjugates Leu, Phe and, less efficiently, Met from aminoacyl-tRNAs to the N-termini of proteins containing an N-terminal arginine or lysine. This chain is Leucyl/phenylalanyl-tRNA--protein transferase, found in Yersinia enterocolitica serotype O:8 / biotype 1B (strain NCTC 13174 / 8081).